The following is a 202-amino-acid chain: B-cell CLL/lymphoma 7 protein family member B (202 aa).

The disordered stretch occupies residues Asp53–Ser202. Residues Glu90–Asp99 show a composition bias toward polar residues. The span at Ser107–Pro123 shows a compositional bias: low complexity. 7 positions are modified to phosphoserine: Ser114, Ser118, Ser120, Ser122, Ser127, Ser148, and Ser152.

Belongs to the BCL7 family.

Positive regulator of apoptosis. Plays a role in the Wnt signaling pathway, negatively regulating the expression of Wnt signaling components CTNNB1 and HMGA1. Involved in cell cycle progression, maintenance of the nuclear structure and stem cell differentiation. May play a role in lung tumor development or progression. In Mus musculus (Mouse), this protein is B-cell CLL/lymphoma 7 protein family member B (Bcl7b).